A 118-amino-acid polypeptide reads, in one-letter code: UPF0295 protein BC_0520 (118 aa).

The next 2 helical transmembrane spans lie at 12 to 32 (IRTF…LGVF) and 43 to 63 (FMMV…WIGM).

Belongs to the UPF0295 family.

The protein localises to the cell membrane. The chain is UPF0295 protein BC_0520 from Bacillus cereus (strain ATCC 14579 / DSM 31 / CCUG 7414 / JCM 2152 / NBRC 15305 / NCIMB 9373 / NCTC 2599 / NRRL B-3711).